We begin with the raw amino-acid sequence, 323 residues long: Acetyl-coenzyme A carboxylase carboxyl transferase subunit alpha (323 aa).

Residues 39–293 (RLAGKSQQLT…KRSLAESLRQ (255 aa)) enclose the CoA carboxyltransferase C-terminal domain.

The protein belongs to the AccA family. Acetyl-CoA carboxylase is a heterohexamer composed of biotin carboxyl carrier protein (AccB), biotin carboxylase (AccC) and two subunits each of ACCase subunit alpha (AccA) and ACCase subunit beta (AccD).

It localises to the cytoplasm. The catalysed reaction is N(6)-carboxybiotinyl-L-lysyl-[protein] + acetyl-CoA = N(6)-biotinyl-L-lysyl-[protein] + malonyl-CoA. The protein operates within lipid metabolism; malonyl-CoA biosynthesis; malonyl-CoA from acetyl-CoA: step 1/1. Functionally, component of the acetyl coenzyme A carboxylase (ACC) complex. First, biotin carboxylase catalyzes the carboxylation of biotin on its carrier protein (BCCP) and then the CO(2) group is transferred by the carboxyltransferase to acetyl-CoA to form malonyl-CoA. The protein is Acetyl-coenzyme A carboxylase carboxyl transferase subunit alpha of Cupriavidus necator (strain ATCC 17699 / DSM 428 / KCTC 22496 / NCIMB 10442 / H16 / Stanier 337) (Ralstonia eutropha).